Reading from the N-terminus, the 126-residue chain is Histone H2B type 1-B (126 aa).

Positions 1–12 (MPEPSKSAPAPK) are enriched in low complexity. The tract at residues 1–36 (MPEPSKSAPAPKKGSKKAISKAQKKDGKKRKRSRKE) is disordered. Pro2 carries the post-translational modification N-acetylproline. Glu3 carries the ADP-ribosyl glutamic acid modification. At Lys6 the chain carries N6-(2-hydroxyisobutyryl)lysine; alternate. N6-(beta-hydroxybutyryl)lysine; alternate is present on Lys6. Residue Lys6 is modified to N6-acetyllysine; alternate. Lys6 carries the N6-butyryllysine; alternate modification. Residue Lys6 is modified to N6-crotonyllysine; alternate. At Lys6 the chain carries N6-lactoyllysine; alternate. Lys6 participates in a covalent cross-link: Glycyl lysine isopeptide (Lys-Gly) (interchain with G-Cter in SUMO2); alternate. An ADP-ribosylserine modification is found at Ser7. Residue Lys12 is modified to N6-(beta-hydroxybutyryl)lysine; alternate. Lys12 and Lys13 each carry N6-acetyllysine; alternate. Residues Lys12 and Lys13 each carry the N6-crotonyllysine; alternate modification. Lys12 is modified (N6-lactoyllysine; alternate). Lys13 carries the post-translational modification N6-(2-hydroxyisobutyryl)lysine; alternate. Phosphoserine; by STK4/MST1 is present on Ser15. N6-acetyllysine; alternate is present on residues Lys16, Lys17, Lys21, and Lys24. N6-crotonyllysine; alternate is present on residues Lys16, Lys17, Lys21, and Lys24. Residues Lys16, Lys17, Lys21, and Lys24 each carry the N6-lactoyllysine; alternate modification. Position 17 is an N6-glutaryllysine; alternate (Lys17). N6-(2-hydroxyisobutyryl)lysine; alternate is present on residues Lys21 and Lys24. N6-(beta-hydroxybutyryl)lysine; alternate is present on Lys21. Lys21 is modified (N6-butyryllysine; alternate). Lys21 participates in a covalent cross-link: Glycyl lysine isopeptide (Lys-Gly) (interchain with G-Cter in SUMO2); alternate. Position 25 is an N6-(2-hydroxyisobutyryl)lysine (Lys25). At Lys35 the chain carries N6-(2-hydroxyisobutyryl)lysine; alternate. An N6-(beta-hydroxybutyryl)lysine; alternate modification is found at Lys35. The residue at position 35 (Lys35) is an N6-crotonyllysine; alternate. Lys35 is modified (N6-glutaryllysine; alternate). Lys35 is subject to N6-succinyllysine; alternate. Lys35 is covalently cross-linked (Glycyl lysine isopeptide (Lys-Gly) (interchain with G-Cter in ubiquitin); alternate). The residue at position 36 (Glu36) is a PolyADP-ribosyl glutamic acid. Ser37 carries the post-translational modification Phosphoserine; by AMPK. N6-(2-hydroxyisobutyryl)lysine; alternate occurs at positions 44, 47, and 58. Lys44 is subject to N6-lactoyllysine; alternate. Residues Lys44 and Lys47 each carry the N6-glutaryllysine; alternate modification. Position 47 is an N6-methyllysine; alternate (Lys47). The residue at position 58 (Lys58) is an N6,N6-dimethyllysine; alternate. Dimethylated arginine is present on Arg80. Lys86 is modified (N6-(2-hydroxyisobutyryl)lysine; alternate). Lys86 carries the post-translational modification N6-acetyllysine; alternate. Lys86 carries the N6-lactoyllysine; alternate modification. Lys86 carries the post-translational modification N6,N6,N6-trimethyllysine; alternate. Residues Arg87 and Arg93 each carry the omega-N-methylarginine modification. Lys109 carries the post-translational modification N6-(2-hydroxyisobutyryl)lysine; alternate. Lys109 carries the post-translational modification N6-(beta-hydroxybutyryl)lysine; alternate. Lys109 carries the post-translational modification N6-lactoyllysine; alternate. The residue at position 109 (Lys109) is an N6-glutaryllysine; alternate. N6-methyllysine; alternate is present on Lys109. O-linked (GlcNAc) serine glycosylation occurs at Ser113. Phosphothreonine is present on Thr116. Lys117 and Lys121 each carry N6-(2-hydroxyisobutyryl)lysine; alternate. An N6-(beta-hydroxybutyryl)lysine; alternate modification is found at Lys117. N6-lactoyllysine; alternate is present on residues Lys117 and Lys121. N6-glutaryllysine; alternate is present on residues Lys117 and Lys121. Residues Lys117 and Lys121 each carry the N6-succinyllysine; alternate modification. Position 117 is an N6-methylated lysine; alternate (Lys117). Lys121 is covalently cross-linked (Glycyl lysine isopeptide (Lys-Gly) (interchain with G-Cter in ubiquitin); alternate).

This sequence belongs to the histone H2B family. As to quaternary structure, the nucleosome is a histone octamer containing two molecules each of H2A, H2B, H3 and H4 assembled in one H3-H4 heterotetramer and two H2A-H2B heterodimers. The octamer wraps approximately 147 bp of DNA. Monoubiquitination at Lys-35 (H2BK34Ub) by the MSL1/MSL2 dimer is required for histone H3 'Lys-4' (H3K4me) and 'Lys-79' (H3K79me) methylation and transcription activation at specific gene loci, such as HOXA9 and MEIS1 loci. Similarly, monoubiquitination at Lys-121 (H2BK120Ub) by the RNF20/40 complex gives a specific tag for epigenetic transcriptional activation and is also prerequisite for histone H3 'Lys-4' and 'Lys-79' methylation. It also functions cooperatively with the FACT dimer to stimulate elongation by RNA polymerase II. H2BK120Ub also acts as a regulator of mRNA splicing: deubiquitination by USP49 is required for efficient cotranscriptional splicing of a large set of exons. Post-translationally, phosphorylated on Ser-15 (H2BS14ph) by STK4/MST1 during apoptosis; which facilitates apoptotic chromatin condensation. Also phosphorylated on Ser-15 in response to DNA double strand breaks (DSBs), and in correlation with somatic hypermutation and immunoglobulin class-switch recombination. Phosphorylation at Ser-37 (H2BS36ph) by AMPK in response to stress promotes transcription. In terms of processing, glcNAcylation at Ser-113 promotes monoubiquitination of Lys-121. It fluctuates in response to extracellular glucose, and associates with transcribed genes. ADP-ribosylated by PARP1 or PARP2 on Ser-7 (H2BS6ADPr) in response to DNA damage. H2BS6ADPr promotes recruitment of CHD1L. Mono-ADP-ribosylated on Glu-3 (H2BE2ADPr) by PARP3 in response to single-strand breaks. Poly ADP-ribosylation on Glu-36 (H2BE35ADPr) by PARP1 regulates adipogenesis: it inhibits phosphorylation at Ser-37 (H2BS36ph), thereby blocking expression of pro-adipogenetic genes. Post-translationally, hydroxybutyrylation of histones is induced by starvation. In terms of processing, crotonylation (Kcr) is specifically present in male germ cells and marks testis-specific genes in post-meiotic cells, including X-linked genes that escape sex chromosome inactivation in haploid cells. Crotonylation marks active promoters and enhancers and confers resistance to transcriptional repressors. It is also associated with post-meiotically activated genes on autosomes. Lactylated in macrophages by EP300/P300 by using lactoyl-CoA directly derived from endogenous or exogenous lactate, leading to stimulates gene transcription.

Its subcellular location is the nucleus. It is found in the chromosome. In terms of biological role, core component of nucleosome. Nucleosomes wrap and compact DNA into chromatin, limiting DNA accessibility to the cellular machineries which require DNA as a template. Histones thereby play a central role in transcription regulation, DNA repair, DNA replication and chromosomal stability. DNA accessibility is regulated via a complex set of post-translational modifications of histones, also called histone code, and nucleosome remodeling. This Mus musculus (Mouse) protein is Histone H2B type 1-B.